A 370-amino-acid polypeptide reads, in one-letter code: Probable phosphoserine aminotransferase (370 aa).

Residue arginine 45 participates in L-glutamate binding. Residues 79–80 (GT), tryptophan 105, threonine 154, aspartate 175, and glutamine 198 each bind pyridoxal 5'-phosphate. Lysine 199 is subject to N6-(pyridoxal phosphate)lysine. 240–241 (NT) contacts pyridoxal 5'-phosphate.

The protein belongs to the class-V pyridoxal-phosphate-dependent aminotransferase family. SerC subfamily. As to quaternary structure, homodimer. Pyridoxal 5'-phosphate is required as a cofactor.

The enzyme catalyses O-phospho-L-serine + 2-oxoglutarate = 3-phosphooxypyruvate + L-glutamate. It carries out the reaction 4-(phosphooxy)-L-threonine + 2-oxoglutarate = (R)-3-hydroxy-2-oxo-4-phosphooxybutanoate + L-glutamate. The protein operates within amino-acid biosynthesis; L-serine biosynthesis; L-serine from 3-phospho-D-glycerate: step 2/3. It participates in cofactor biosynthesis; pyridoxine 5'-phosphate biosynthesis; pyridoxine 5'-phosphate from D-erythrose 4-phosphate: step 3/5. Its function is as follows. Catalyzes the reversible conversion of 3-phosphohydroxypyruvate to phosphoserine and of 3-hydroxy-2-oxo-4-phosphonooxybutanoate to phosphohydroxythreonine. The protein is Probable phosphoserine aminotransferase of Caenorhabditis elegans.